Consider the following 274-residue polypeptide: 4-diphosphocytidyl-2-C-methyl-D-erythritol kinase (274 aa).

The active site involves K7. Residue 90-100 (PMGGGLGGGSS) participates in ATP binding. Residue D132 is part of the active site.

The protein belongs to the GHMP kinase family. IspE subfamily.

It carries out the reaction 4-CDP-2-C-methyl-D-erythritol + ATP = 4-CDP-2-C-methyl-D-erythritol 2-phosphate + ADP + H(+). It functions in the pathway isoprenoid biosynthesis; isopentenyl diphosphate biosynthesis via DXP pathway; isopentenyl diphosphate from 1-deoxy-D-xylulose 5-phosphate: step 3/6. Functionally, catalyzes the phosphorylation of the position 2 hydroxy group of 4-diphosphocytidyl-2C-methyl-D-erythritol. This is 4-diphosphocytidyl-2-C-methyl-D-erythritol kinase from Dechloromonas aromatica (strain RCB).